We begin with the raw amino-acid sequence, 326 residues long: MYNLSILETQKAIKFIKDLFQVNLAHALKLHRVTAPLVLERNKGINDDLNGSENPVTFTSDGNGISGEIPQSLAKWKRMMLGKYEIPLHEGIYADMNAIRKDESLSSIHSIYVDQWDWELHIKKTERNLETLKVVVKKIYEIIRLCQKEVNKKYEWFAENLLPEEITFISSEDLLQRYPNKTPKERERLIASKYKAVFIIGIGDNLSDGKPHDLRAPDYDDWKLNGDIIVWNETTKSALELSSMGIRVDEVSLVEQLDKSNNNSRKELDFHKKLINKEFPYSIGGGIGQSRLCYFLLHKQHIGEVQSSLWPKDILEEAEKNNIKLL.

Belongs to the class-II aminoacyl-tRNA synthetase family. AsnA subfamily.

The protein localises to the cytoplasm. It carries out the reaction L-aspartate + NH4(+) + ATP = L-asparagine + AMP + diphosphate + H(+). It participates in amino-acid biosynthesis; L-asparagine biosynthesis; L-asparagine from L-aspartate (ammonia route): step 1/1. The protein is Aspartate--ammonia ligase of Malacoplasma penetrans (strain HF-2) (Mycoplasma penetrans).